Here is a 214-residue protein sequence, read N- to C-terminus: DELTA-actitoxin-Aeq1b (214 aa).

The N-terminal stretch at 1 to 19 (MSRLIIVFIVVTMICAATA) is a signal peptide. Positions 20-35 (LSSKKSINEDEKDEKR) are excised as a propeptide. The interval 38 to 47 (AVAGAVIEGA) is plays an important role in the hemolytic activity. Positions 46–65 (GATLTFNVLQTVLKALGDIS) are N-terminal region. Residues serine 89, valine 122, serine 140, proline 142, tyrosine 168, tyrosine 172, and tyrosine 173 each contribute to the phosphocholine site. Residues 140 to 155 (SIPFDYNLYSNWWNVK) form a trp-rich region, which is important for the binding to lipid membrane region. Positions 179 to 181 (RGD) match the Cell attachment site, crucial for protein stability motif.

This sequence belongs to the actinoporin family. Sea anemone subfamily. In terms of assembly, octamer or nonamer in membranes. Monomer in the soluble state.

The protein localises to the secreted. Its subcellular location is the nematocyst. It localises to the target cell membrane. Its function is as follows. Pore-forming protein that forms cations-selective hydrophilic pores of around 1 nm and causes cytolysis. Pore formation is a multi-step process that involves specific recognition of membrane sphingomyelin (but neither cholesterol nor phosphatidylcholine) using aromatic rich region and adjacent phosphocholine (POC) binding site, firm binding to the membrane (mainly driven by hydrophobic interactions) accompanied by the transfer of the N-terminal region to the lipid-water interface and finally pore formation after oligomerization of monomers. The sequence is that of DELTA-actitoxin-Aeq1b from Actinia equina (Beadlet anemone).